A 381-amino-acid polypeptide reads, in one-letter code: Protein TRIGALACTOSYLDIACYLGLYCEROL 2, chloroplastic (381 aa).

The transit peptide at 1 to 45 directs the protein to the chloroplast; it reads MIGNPVIQVPSSLMPSSSMIACPRVSPNGVPYLPPKPRTRHLVVR. The Stromal segment spans residues 46–96; the sequence is AASNSDAAHGQPSSDGGKNPLTVVLDVPRNIWRQTLKPLSDFGFGKRSIWE. Residues 97–117 form a helical membrane-spanning segment; it reads GGVGLFIVSGATLLALSWAWL. Over 118–381 the chain is Chloroplast intermembrane; sequence RGFQMRSKFR…LLIKSLSRLL (264 aa).

In terms of assembly, homomultimer. Substrate-binding subunit of the TGD complex, a lipid translocator at the inner chloroplast envelope membrane made of TGD1, TGD2 and TGD3. Interacts with TGD1 and TGD3 with an overall subunit stoichiometry of 2 TGD1, 2 TGD3 and 8 to 12 TGD2. Interacts with TGD5.

Its subcellular location is the plastid. The protein localises to the chloroplast inner membrane. Its function is as follows. Component of a phosphatidic acid/lipid transport complex in the chloroplast envelope. Specifically binds phosphatidic acid (PA). Involved in lipid transfer from the endoplasmic reticulum (ER) to plastids, and necessary for thylakoids formation. The chain is Protein TRIGALACTOSYLDIACYLGLYCEROL 2, chloroplastic from Arabidopsis thaliana (Mouse-ear cress).